The primary structure comprises 459 residues: Bifunctional protein GlmU (459 aa).

Residues 1-230 (MTTRNTIILA…FDESMGVNDR (230 aa)) are pyrophosphorylase. Residues 9-12 (LAAG), K23, Q73, 78-79 (GT), 101-103 (SGD), G140, E155, N170, and N228 contribute to the UDP-N-acetyl-alpha-D-glucosamine site. D103 lines the Mg(2+) pocket. Residue N228 coordinates Mg(2+). Residues 231 to 251 (VALSAATKIMRDRINEAHMRD) form a linker region. Residues 252–459 (GVTLIDPATT…YQKLPYRGED (208 aa)) are N-acetyltransferase. Positions 333 and 351 each coordinate UDP-N-acetyl-alpha-D-glucosamine. Residue H363 is the Proton acceptor of the active site. Positions 366 and 377 each coordinate UDP-N-acetyl-alpha-D-glucosamine. Acetyl-CoA contacts are provided by residues 386 to 387 (NY), S405, A423, and R440.

It in the N-terminal section; belongs to the N-acetylglucosamine-1-phosphate uridyltransferase family. In the C-terminal section; belongs to the transferase hexapeptide repeat family. As to quaternary structure, homotrimer. Mg(2+) is required as a cofactor.

It localises to the cytoplasm. It catalyses the reaction alpha-D-glucosamine 1-phosphate + acetyl-CoA = N-acetyl-alpha-D-glucosamine 1-phosphate + CoA + H(+). The catalysed reaction is N-acetyl-alpha-D-glucosamine 1-phosphate + UTP + H(+) = UDP-N-acetyl-alpha-D-glucosamine + diphosphate. It participates in nucleotide-sugar biosynthesis; UDP-N-acetyl-alpha-D-glucosamine biosynthesis; N-acetyl-alpha-D-glucosamine 1-phosphate from alpha-D-glucosamine 6-phosphate (route II): step 2/2. The protein operates within nucleotide-sugar biosynthesis; UDP-N-acetyl-alpha-D-glucosamine biosynthesis; UDP-N-acetyl-alpha-D-glucosamine from N-acetyl-alpha-D-glucosamine 1-phosphate: step 1/1. Its pathway is bacterial outer membrane biogenesis; LPS lipid A biosynthesis. Functionally, catalyzes the last two sequential reactions in the de novo biosynthetic pathway for UDP-N-acetylglucosamine (UDP-GlcNAc). The C-terminal domain catalyzes the transfer of acetyl group from acetyl coenzyme A to glucosamine-1-phosphate (GlcN-1-P) to produce N-acetylglucosamine-1-phosphate (GlcNAc-1-P), which is converted into UDP-GlcNAc by the transfer of uridine 5-monophosphate (from uridine 5-triphosphate), a reaction catalyzed by the N-terminal domain. This is Bifunctional protein GlmU from Levilactobacillus brevis (strain ATCC 367 / BCRC 12310 / CIP 105137 / JCM 1170 / LMG 11437 / NCIMB 947 / NCTC 947) (Lactobacillus brevis).